A 496-amino-acid chain; its full sequence is Sodium/sialic acid symporter SiaT (496 aa).

Over 1–7 (MQLHDFG) the chain is Periplasmic. The helical transmembrane segment at 8 to 29 (FINYAVLFGYLAAMLLVGVYFS) threads the bilayer. The Cytoplasmic segment spans residues 30–46 (KRQKTADDYFRGGGRVP). A helical transmembrane segment spans residues 47–59 (GWAAGVSVFATTL). Alanine 56 contacts Na(+). An N-acetyl-alpha-neuraminate-binding site is contributed by threonine 58. Leucine 59 lines the Na(+) pocket. Residues serine 60, threonine 63, and glutamine 82 each coordinate N-acetyl-alpha-neuraminate. The Periplasmic portion of the chain corresponds to 60–76 (SSITFMSIPAKAYTSDW). The helical transmembrane segment at 77–92 (TFIIGQYLAIAILPLV) threads the bilayer. Over 93–116 (FYFYIPFFRKLKITSAYEYLEARF) the chain is Cytoplasmic. Residues 117 to 144 (DVRSRLFASLSFMLFHIGRVAIITYLTV) form a helical membrane-spanning segment. Arginine 135 contacts N-acetyl-alpha-neuraminate. Over 145–154 (LALRPFMGID) the chain is Periplasmic. Residues 155–172 (PVVLIVLISLLCIIYTWM) traverse the membrane as a helical segment. Topologically, residues 173–174 (GG) are cytoplasmic. Residues 175 to 199 (IEGVIWTDVIQGLLLSGGAVLIFIM) form a helical membrane-spanning segment. Na(+) is bound at residue aspartate 182. Residues 200 to 235 (ICFKVDGGISEIFTTTAQADKFFPTTQWRWSWTDST) lie on the Periplasmic side of the membrane. The helical transmembrane segment at 236-252 (IPVLMIGFLFANIQQFT) threads the bilayer. At 253-272 (ASQDVVQRYIVTDSIKETKR) the chain is on the cytoplasmic side. A helical transmembrane segment spans residues 273–292 (TLITNAKLVAIIPIFFFAIG). The Periplasmic portion of the chain corresponds to 293-325 (SALFVYYQQNPSLLPAGFNTGGILPLFIVTEMP). Residues 326–356 (IGIAGLIIAAIFAAAQSSISSSLNSISSCFN) traverse the membrane as a helical segment. Positions 339, 342, 343, 345, and 346 each coordinate Na(+). Topologically, residues 357 to 374 (SDIYTRLSKSSPSPEQKM) are cytoplasmic. Residues 375–396 (KVAKLVIIVAGIFSSLAAIWLV) form a helical membrane-spanning segment. Residues 397 to 403 (LSDEAEI) lie on the Periplasmic side of the membrane. The helical transmembrane segment at 404–427 (WDAFNSLIGLMGGPMTGLFMLGIF) threads the bilayer. At 428–432 (VKRAN) the chain is on the cytoplasmic side. Residues 433–453 (AGSAVVGIIVSIIAVLAARYG) form a helical membrane-spanning segment. The Periplasmic segment spans residues 454-457 (SDLN). The chain crosses the membrane as a helical span at residues 458-479 (FFFYGVIGSMSVVIAGTITAPL). Residues 480 to 496 (FAPAKQLSLDDSETSEN) are Cytoplasmic-facing.

Belongs to the sodium:solute symporter (SSF) (TC 2.A.21) family.

The protein localises to the cell inner membrane. The catalysed reaction is N-acetyl-alpha-neuraminate(out) + 2 Na(+)(out) = N-acetyl-alpha-neuraminate(in) + 2 Na(+)(in). Its activity is regulated as follows. Both Na(+) sites regulate Neu5Ac transport. The binding energy of the second Na(+) ion may be used to allosterically stabilize the substrate without directly coordinating it. In the absence of external Na(+), the rate is reduced by 78%. Symporter that uses the Na(+) gradient as the driving force for the uptake of the sialic acid N-acetylneuraminic acid (Neu5Ac). It allows the use of host-derived Neu5Ac as an energy source by P.mirabilis. Also binds N-glycolylneuraminic acid (Neu5Gc) and ketodeoxynonulosonic acid (KDN). Shows the highest affinity for Neu5Ac and Neu5Gc, which commonly occupy the terminal non-reducing position of mammalian cell surface glycoconjugates. The chain is Sodium/sialic acid symporter SiaT from Proteus mirabilis (strain HI4320).